The following is a 209-amino-acid chain: Pyridoxine/pyridoxamine 5'-phosphate oxidase (209 aa).

Substrate is bound by residues 7 to 10 and Lys-64; that span reads REDY. FMN contacts are provided by residues 59–64, 74–75, Arg-80, and Lys-81; these read RIVLLK and FT. Tyr-121, Arg-125, and Ser-129 together coordinate substrate. FMN-binding positions include 138–139 and Trp-182; that span reads QS. 188–190 lines the substrate pocket; sequence RLH. Arg-192 is a binding site for FMN.

The protein belongs to the pyridoxamine 5'-phosphate oxidase family. In terms of assembly, homodimer. Requires FMN as cofactor.

It carries out the reaction pyridoxamine 5'-phosphate + O2 + H2O = pyridoxal 5'-phosphate + H2O2 + NH4(+). The catalysed reaction is pyridoxine 5'-phosphate + O2 = pyridoxal 5'-phosphate + H2O2. Its pathway is cofactor metabolism; pyridoxal 5'-phosphate salvage; pyridoxal 5'-phosphate from pyridoxamine 5'-phosphate: step 1/1. It participates in cofactor metabolism; pyridoxal 5'-phosphate salvage; pyridoxal 5'-phosphate from pyridoxine 5'-phosphate: step 1/1. Its function is as follows. Catalyzes the oxidation of either pyridoxine 5'-phosphate (PNP) or pyridoxamine 5'-phosphate (PMP) into pyridoxal 5'-phosphate (PLP). This is Pyridoxine/pyridoxamine 5'-phosphate oxidase from Actinobacillus pleuropneumoniae serotype 7 (strain AP76).